Here is a 436-residue protein sequence, read N- to C-terminus: Hydrolyase ccsE (436 aa).

Residue Ser249 is the Nucleophile of the active site.

It belongs to the AB hydrolase superfamily. FUS2 hydrolase family. In terms of assembly, homodimer.

It participates in mycotoxin biosynthesis. Functionally, hydrolyase; part of the gene cluster that mediates the biosynthesis of a family of the mycotoxins cytochalasins E and K. The hybrid PKS-NRPS synthetase ccsA and the enoyl reductase ccsC are responsible for fusion of phenylalanine with an octaketide backbone and subsequent release of the stable tetramic acid precursor. The polyketide synthase module (PKS) of the PKS-NRPS ccsA is responsible for the synthesis of the octaketide backbone. The downstream nonribosomal peptide synthetase (NRPS) amidates the carboxyl end of the octaketide with a phenylalanine. A reductase-like domain (R) at the C-terminus catalyzes the reductive release of the polyketide-amino acid intermediate. Because ccsA lacks a designated enoylreductase (ER) domain, the required activity is provided the enoyl reductase ccsC. Upon formation of the 11-membered carbocycle-fused perhydroisoindolone intermediate, a number of oxidative steps are required to afford the final cytochalasin E and K, including two hydroxylations at C17 and C18, one alcohol oxidation at C17, one epoxidation at C6 and C7 and two Baeyer-Villiger oxidations. The oxidative modification at C17, C18 and the C6-C7 epoxidation are likely to be catalyzed by the two cytochrome P450 oxygenases ccsD and ccsG. CcsD may be responsible for the epoxidation of the C6-C7 double bond. CcsG may be responsible for the successive oxidative modifications at C17 and C18. The double Baeyer-Villiger oxidations of ketocytochalasin to precytochalasin and cytochalasin Z(16) are among the final steps leading to cytochalasin E and K and are catalyzed by ccsB. The first oxygen insertion step follows that of the classic BVMO mechanism, generating the ester precytochalasin. Release of precytochalasin into an aqueous environment can generate the shunt product iso-precytochalasin through spontaneous isomerization. Alternatively, precytochalasin can undergo further oxidation by ccsB to yield the in-line carbonate-containing cytochalasin Z(16). Cytochalasin Z(16) is a precursor to cytochalasin E and cytochalasin K, whereas iso-precytochalasin is a precursor to cytochalasin Z(17) and rosellichalasin. The hydrolyase ccsE may catalyze hydrolysis of epoxide bond in cytochalasin E to afford cytochalasin K. The function of ccsF has not been assigned but it may play a role in post-PKS-NRPS biosynthetic step, resistance or transport of cytochalasins and related PKS-NRPS products. The polypeptide is Hydrolyase ccsE (Aspergillus clavatus (strain ATCC 1007 / CBS 513.65 / DSM 816 / NCTC 3887 / NRRL 1 / QM 1276 / 107)).